Here is a 101-residue protein sequence, read N- to C-terminus: Small ribosomal subunit protein uS14m (101 aa).

The protein belongs to the universal ribosomal protein uS14 family. As to quaternary structure, component of the mitochondrial ribosome small subunit (28S) which comprises a 12S rRNA and about 30 distinct proteins. Interacts with LIAT1.

It localises to the mitochondrion. The polypeptide is Small ribosomal subunit protein uS14m (mrps14) (Dictyostelium discoideum (Social amoeba)).